Consider the following 605-residue polypeptide: Podocalyxin-like protein 2 (605 aa).

The first 32 residues, 1–32 (MGRLLRAARLPPLLSPLLLLLVGGAFLGACVA), serve as a signal peptide directing secretion. At 33–500 (GSDEPGPEGL…ASQVRSDYGT (468 aa)) the chain is on the extracellular side. Ser-79 carries an O-linked (Xyl...) (chondroitin sulfate) serine glycan. Sulfotyrosine occurs at positions 97 and 118. Residues 129–134 (SIEDTS) form an O-glycosylated at one site region. A disordered region spans residues 129–347 (SIEDTSQAQE…PGDMELTPSS (219 aa)). Ser-144 carries O-linked (GalNAc...) serine glycosylation. A compositionally biased stretch (acidic residues) spans 162–189 (EEEEEEEEEEEREKEEVEKQEEEEEEEL). A glycan (N-linked (GlcNAc...) asparagine) is linked at Asn-193. Residues 207–217 (SLTSSSQTPGA) show a composition bias toward polar residues. Low complexity-rich tracts occupy residues 241 to 255 (PSLL…TVTP) and 288 to 298 (EATAGAAGLSG). An N-linked (GlcNAc...) asparagine glycan is attached at Asn-395. A helical membrane pass occupies residues 501-521 (LFVVLVVIGAICIIIIALGLL). At 522 to 605 (YNCWQRRLPK…SDVFEEDTHL (84 aa)) the chain is on the cytoplasmic side. The tract at residues 554 to 605 (LDVASDSQSEMQEKHPSLNGGGALNGPGSWGALMGGKRDPEDSDVFEEDTHL) is disordered. Ser-570 carries the post-translational modification Phosphoserine. Positions 572–582 (NGGGALNGPGS) are enriched in gly residues. The segment covering 594–605 (EDSDVFEEDTHL) has biased composition (acidic residues). Ser-596 carries the phosphoserine modification.

Belongs to the podocalyxin family. Homodimer; disulfide-linked. Interacts with SELL, SELE and SELP. Post-translationally, O-glycosylated; contains chondroitin sulfate. Displays sialylated O-linked oligosaccharides. In terms of processing, sulfation is necessary for interaction with SELL. Sialylated O-linked oligosaccharides are necessary for interaction with SELL, SELE and SELP. As to expression, expressed in T-cells, B-cells and monocytes. Expression is higher on memory and germinal center cells than on naive B-cells (at protein level). Highly expressed in brain. Moderately expressed in pancreas, kidney and lymphoid node. Weakly expressed in liver. Detected in both endothelial cells and CD34+ bone marrow cells.

It localises to the membrane. Its function is as follows. Acts as a ligand for vascular selectins. Mediates rapid rolling of leukocytes over vascular surfaces through high affinity divalent cation-dependent interactions with E-, P- and L-selectins. The chain is Podocalyxin-like protein 2 (PODXL2) from Homo sapiens (Human).